Reading from the N-terminus, the 391-residue chain is Casein kinase II subunit alpha (391 aa).

The interval 36–41 (QDDYQL) is interaction with beta subunit. Positions 39 to 324 (YQLVRKLGRG…AREAMEHPYF (286 aa)) constitute a Protein kinase domain. Residues 45–53 (LGRGKYSEV) and Lys68 each bind ATP. Asp156 serves as the catalytic Proton acceptor. Positions 335-346 (GSSNMPGGSTPV) are enriched in polar residues. Positions 335-363 (GSSNMPGGSTPVSSASMMSGISSVPTPSP) are disordered. Low complexity predominate over residues 347–357 (SSASMMSGISS).

Belongs to the protein kinase superfamily. Ser/Thr protein kinase family. CK2 subfamily. As to quaternary structure, tetramer composed of an alpha chain, an alpha' and two beta chains. Interacts with RNPS1.

It localises to the nucleus. The enzyme catalyses L-seryl-[protein] + ATP = O-phospho-L-seryl-[protein] + ADP + H(+). It catalyses the reaction L-threonyl-[protein] + ATP = O-phospho-L-threonyl-[protein] + ADP + H(+). Functionally, catalytic subunit of a constitutively active serine/threonine-protein kinase complex that phosphorylates a large number of substrates containing acidic residues C-terminal to the phosphorylated serine or threonine. Regulates numerous cellular processes, such as cell cycle progression, apoptosis and transcription, as well as viral infection. May act as a regulatory node which integrates and coordinates numerous signals leading to an appropriate cellular response. During mitosis, functions as a component of the p53/TP53-dependent spindle assembly checkpoint (SAC) that maintains cyclin-B-CDK1 activity and G2 arrest in response to spindle damage. Can also negatively regulate apoptosis. Phosphorylates the caspases CASP9 and CASP2 and the apoptotic regulator NOL3. Phosphorylation protects CASP9 from cleavage and activation by CASP8, and inhibits the dimerization of CASP2 and activation of CASP8. Plays an important role in the circadian clock function by phosphorylating BMAL1. The sequence is that of Casein kinase II subunit alpha (CSNK2A1) from Gallus gallus (Chicken).